Reading from the N-terminus, the 324-residue chain is Olfactory receptor 1L3 (324 aa).

At 1–25 the chain is on the extracellular side; sequence MGMSNLTRLSEFILLGLSSRSEDQR. N-linked (GlcNAc...) asparagine glycosylation occurs at asparagine 5. A helical membrane pass occupies residues 26–49; that stretch reads PLFALFLIIYLVTLMGNLLIILAI. The Cytoplasmic segment spans residues 50–57; that stretch reads HSDPRLQN. The helical transmembrane segment at 58 to 79 threads the bilayer; that stretch reads PMYFFLSILSFADICYTTVIVP. Residues 80-100 are Extracellular-facing; sequence KMLVNFLSEKKTISYAECLAQ. The cysteines at positions 97 and 189 are disulfide-linked. A helical transmembrane segment spans residues 101-120; sequence MYFFLVFGNIDSYLLAAMAI. The Cytoplasmic segment spans residues 121-139; sequence NRCVAICNPFHYVTVMNRR. Residues 140-158 form a helical membrane-spanning segment; that stretch reads CCVLLLAFPITFSYFHSLL. At 159–196 the chain is on the extracellular side; the sequence is HVLLVNRLTFCTSNVIHHFFCDVNPVLKLSCSSTFVNE. Residues 197–219 form a helical membrane-spanning segment; the sequence is IVAMTEGLASVMAPFVCIIISYL. Residues 220 to 236 are Cytoplasmic-facing; that stretch reads RILIAVLKIPSAAGKHK. A helical transmembrane segment spans residues 237 to 259; it reads AFSTCSSHLTVVILFYGSISYVY. Over 260-271 the chain is Extracellular; that stretch reads LQPLSSYTVKDR. The chain crosses the membrane as a helical span at residues 272 to 291; sequence IATINYTVLTSVLNPFIYSL. Over 292-324 the chain is Cytoplasmic; it reads RNKDMKRGLQKLINKIKSQMSRFSTKTNKICGP.

It belongs to the G-protein coupled receptor 1 family.

The protein resides in the cell membrane. Odorant receptor. The sequence is that of Olfactory receptor 1L3 (OR1L3) from Homo sapiens (Human).